Reading from the N-terminus, the 303-residue chain is UDP-N-acetylenolpyruvoylglucosamine reductase (303 aa).

The FAD-binding PCMH-type domain maps to 23-188 (KVGGPADYLV…ISAKFALKPG (166 aa)). R167 is an active-site residue. S217 serves as the catalytic Proton donor. The active site involves E287.

It belongs to the MurB family. FAD is required as a cofactor.

The protein localises to the cytoplasm. The catalysed reaction is UDP-N-acetyl-alpha-D-muramate + NADP(+) = UDP-N-acetyl-3-O-(1-carboxyvinyl)-alpha-D-glucosamine + NADPH + H(+). It functions in the pathway cell wall biogenesis; peptidoglycan biosynthesis. Functionally, cell wall formation. This Streptococcus uberis (strain ATCC BAA-854 / 0140J) protein is UDP-N-acetylenolpyruvoylglucosamine reductase.